The primary structure comprises 563 residues: Cystathionine gamma-synthase 1, chloroplastic (563 aa).

The N-terminal 68 residues, 1 to 68 (MAVSSFQCPT…SRILRFPPNF (68 aa)), are a transit peptide targeting the chloroplast. The pyridoxal 5'-phosphate site is built by tyrosine 226, arginine 228, glycine 256, methionine 257, tyrosine 281, serine 376, and threonine 378. The residue at position 379 (lysine 379) is an N6-(pyridoxal phosphate)lysine.

This sequence belongs to the trans-sulfuration enzymes family. The cofactor is pyridoxal 5'-phosphate.

The protein localises to the plastid. Its subcellular location is the chloroplast. The enzyme catalyses O-phospho-L-homoserine + L-cysteine = L,L-cystathionine + phosphate. The catalysed reaction is O-succinyl-L-homoserine + L-cysteine = L,L-cystathionine + succinate + H(+). The protein operates within amino-acid biosynthesis; L-methionine biosynthesis via de novo pathway; L-cystathionine from O-succinyl-L-homoserine: step 1/1. Inhibited by propargylglycine. In terms of biological role, catalyzes the first committed step of methionine (Met) biosynthesis. Catalyzes the formation of L-cystathionine from homoserine esters and L-cysteine, via a gamma-replacement reaction. Substrate preference for cystathionine synthesis is O-phospho-L-homoserine (OPH) &gt; O(4)-succinyl-L-homoserine (OSH) &gt;&gt; O-acetyl-L-homoserine (OAH). Is able, at extremely low rate, to catalyze a gamma-elimination of OPH in the absence of cysteine to produce inorganic phosphate (Pi), 2-oxobutanoate and ammonia. The chain is Cystathionine gamma-synthase 1, chloroplastic from Arabidopsis thaliana (Mouse-ear cress).